Consider the following 155-residue polypeptide: Protein-export protein SecB (155 aa).

The protein belongs to the SecB family. Homotetramer, a dimer of dimers. One homotetramer interacts with 1 SecA dimer.

Its subcellular location is the cytoplasm. One of the proteins required for the normal export of preproteins out of the cell cytoplasm. It is a molecular chaperone that binds to a subset of precursor proteins, maintaining them in a translocation-competent state. It also specifically binds to its receptor SecA. The polypeptide is Protein-export protein SecB (Vibrio atlanticus (strain LGP32) (Vibrio splendidus (strain Mel32))).